The following is a 92-amino-acid chain: Exodeoxyribonuclease 7 small subunit (92 aa).

The tract at residues 1 to 22 is disordered; that stretch reads MPKKNAISESTNSTPETAPAMT. Over residues 7-16 the composition is skewed to polar residues; the sequence is ISESTNSTPE.

This sequence belongs to the XseB family. In terms of assembly, heterooligomer composed of large and small subunits.

The protein localises to the cytoplasm. It catalyses the reaction Exonucleolytic cleavage in either 5'- to 3'- or 3'- to 5'-direction to yield nucleoside 5'-phosphates.. Its function is as follows. Bidirectionally degrades single-stranded DNA into large acid-insoluble oligonucleotides, which are then degraded further into small acid-soluble oligonucleotides. This Photorhabdus laumondii subsp. laumondii (strain DSM 15139 / CIP 105565 / TT01) (Photorhabdus luminescens subsp. laumondii) protein is Exodeoxyribonuclease 7 small subunit.